The chain runs to 214 residues: Octanoyltransferase (214 aa).

Residues 34-214 (GLQKELVWLL…KFNEIFSSFN (181 aa)) enclose the BPL/LPL catalytic domain. Residues 73–80 (RGGKYTYH), 145–147 (AFG), and 158–160 (GVS) contribute to the substrate site. The active-site Acyl-thioester intermediate is the cysteine 176.

The protein belongs to the LipB family.

It localises to the cytoplasm. It carries out the reaction octanoyl-[ACP] + L-lysyl-[protein] = N(6)-octanoyl-L-lysyl-[protein] + holo-[ACP] + H(+). Its pathway is protein modification; protein lipoylation via endogenous pathway; protein N(6)-(lipoyl)lysine from octanoyl-[acyl-carrier-protein]: step 1/2. Catalyzes the transfer of endogenously produced octanoic acid from octanoyl-acyl-carrier-protein onto the lipoyl domains of lipoate-dependent enzymes. Lipoyl-ACP can also act as a substrate although octanoyl-ACP is likely to be the physiological substrate. The protein is Octanoyltransferase of Ehrlichia canis (strain Jake).